A 100-amino-acid chain; its full sequence is Probable antitoxin MazE4 (100 aa).

Residues 77-100 form a disordered region; the sequence is PYESEAERSAARARRNARQQRSAQ.

In terms of assembly, forms a complex with cognate toxin MazF4.

Antitoxin component of a type II toxin-antitoxin (TA) system. Labile antitoxin that binds to cognate MazF4 toxin and counteracts its endoribonuclease activity. This chain is Probable antitoxin MazE4 (mazE4), found in Mycobacterium tuberculosis (strain CDC 1551 / Oshkosh).